A 622-amino-acid chain; its full sequence is tRNA uridine 5-carboxymethylaminomethyl modification enzyme MnmG (622 aa).

10-15 (GGGHAG) provides a ligand contact to FAD. Residue 269 to 283 (GPRYCPSVEDKIVKF) coordinates NAD(+).

This sequence belongs to the MnmG family. In terms of assembly, homodimer. Heterotetramer of two MnmE and two MnmG subunits. FAD serves as cofactor.

It is found in the cytoplasm. NAD-binding protein involved in the addition of a carboxymethylaminomethyl (cmnm) group at the wobble position (U34) of certain tRNAs, forming tRNA-cmnm(5)s(2)U34. The protein is tRNA uridine 5-carboxymethylaminomethyl modification enzyme MnmG of Bartonella quintana (strain Toulouse) (Rochalimaea quintana).